The primary structure comprises 672 residues: Beta-galactosidase BgaB (672 aa).

Arg109 contacts substrate. Residue Cys113 participates in Zn(2+) binding. Asn147 contacts substrate. The active-site Proton donor is Glu148. 3 residues coordinate Zn(2+): Cys156, Cys158, and Cys161. Glu303 functions as the Nucleophile in the catalytic mechanism. Substrate contacts are provided by residues Trp311 and 351–354 (EKFH).

Belongs to the glycosyl hydrolase 42 family.

The enzyme catalyses Hydrolysis of terminal non-reducing beta-D-galactose residues in beta-D-galactosides.. This is Beta-galactosidase BgaB from Geobacillus sp. (strain Y412MC61).